The chain runs to 466 residues: DNA repair protein RadA (466 aa).

A C4-type zinc finger spans residues 12–29; it reads CSECQHVAPKWVGRCANC. 100-107 contributes to the ATP binding site; sequence GDPGVGKS. Residues 261-265 carry the RadA KNRFG motif motif; the sequence is KNRFG. Residues 359–466 are lon-protease-like; it reads DLYLSTVGGM…MREIAIAGAQ (108 aa).

This sequence belongs to the RecA family. RadA subfamily. In terms of assembly, interacts with DisA.

Its function is as follows. DNA-dependent ATPase involved in processing of recombination intermediates, plays a role in repairing DNA breaks. Stimulates the branch migration of RecA-mediated strand transfer reactions, allowing the 3' invading strand to extend heteroduplex DNA faster. Binds ssDNA in the presence of ADP but not other nucleotides, has ATPase activity that is stimulated by ssDNA and various branched DNA structures, but inhibited by SSB. Does not have RecA's homology-searching function. Also inhibits the diadenylate cyclase activity of DisA. The sequence is that of DNA repair protein RadA from Mycolicibacterium smegmatis (strain ATCC 700084 / mc(2)155) (Mycobacterium smegmatis).